A 234-amino-acid polypeptide reads, in one-letter code: Phosphoribosylaminoimidazole-succinocarboxamide synthase (234 aa).

The protein belongs to the SAICAR synthetase family.

It carries out the reaction 5-amino-1-(5-phospho-D-ribosyl)imidazole-4-carboxylate + L-aspartate + ATP = (2S)-2-[5-amino-1-(5-phospho-beta-D-ribosyl)imidazole-4-carboxamido]succinate + ADP + phosphate + 2 H(+). It participates in purine metabolism; IMP biosynthesis via de novo pathway; 5-amino-1-(5-phospho-D-ribosyl)imidazole-4-carboxamide from 5-amino-1-(5-phospho-D-ribosyl)imidazole-4-carboxylate: step 1/2. The protein is Phosphoribosylaminoimidazole-succinocarboxamide synthase of Exiguobacterium sp. (strain ATCC BAA-1283 / AT1b).